Consider the following 366-residue polypeptide: Chorismate synthase (366 aa).

NADP(+) contacts are provided by arginine 48 and arginine 54. Residues arginine 125 to serine 127, asparagine 238 to alanine 239, glycine 278, lysine 293 to serine 297, and arginine 319 contribute to the FMN site.

The protein belongs to the chorismate synthase family. Homotetramer. The cofactor is FMNH2.

The catalysed reaction is 5-O-(1-carboxyvinyl)-3-phosphoshikimate = chorismate + phosphate. It functions in the pathway metabolic intermediate biosynthesis; chorismate biosynthesis; chorismate from D-erythrose 4-phosphate and phosphoenolpyruvate: step 7/7. In terms of biological role, catalyzes the anti-1,4-elimination of the C-3 phosphate and the C-6 proR hydrogen from 5-enolpyruvylshikimate-3-phosphate (EPSP) to yield chorismate, which is the branch point compound that serves as the starting substrate for the three terminal pathways of aromatic amino acid biosynthesis. This reaction introduces a second double bond into the aromatic ring system. The protein is Chorismate synthase of Neisseria meningitidis serogroup B (strain ATCC BAA-335 / MC58).